Reading from the N-terminus, the 412-residue chain is Argininosuccinate synthase (412 aa).

An ATP-binding site is contributed by 10 to 18 (AYSGGLDTS). Position 89 (Tyr-89) interacts with L-citrulline. An ATP-binding site is contributed by Gly-119. Positions 121, 125, and 126 each coordinate L-aspartate. Position 125 (Asn-125) interacts with L-citrulline. Positions 129, 177, 261, and 273 each coordinate L-citrulline.

This sequence belongs to the argininosuccinate synthase family. Type 1 subfamily. As to quaternary structure, homotetramer.

It is found in the cytoplasm. The enzyme catalyses L-citrulline + L-aspartate + ATP = 2-(N(omega)-L-arginino)succinate + AMP + diphosphate + H(+). It participates in amino-acid biosynthesis; L-arginine biosynthesis; L-arginine from L-ornithine and carbamoyl phosphate: step 2/3. This chain is Argininosuccinate synthase, found in Bifidobacterium longum (strain DJO10A).